The sequence spans 530 residues: 4,4'-diapolycopene aldehyde oxidase (530 aa).

Catalysis depends on residues E234 and C268.

This sequence belongs to the aldehyde dehydrogenase family.

It carries out the reaction all-trans-4,4'-diapolycopen-4-al + A + H2O = all-trans-4,4'-diapolycopen-4-oate + AH2 + H(+). The enzyme catalyses all-trans-4,4'-diapolycopene-4,4'-dial + 2 A + 2 H2O = all-trans-4,4'-diapolycopene-4,4'-dioate + 2 AH2 + 2 H(+). It functions in the pathway carotenoid biosynthesis. Functionally, involved in the biosynthesis of C30 carotenoids. Catalyzes the oxidation of 4,4'-diapolycopene-4,4'-dial to yield 4,4'-diapolycopene-4,4'-dioic acid. Also able to catalyze the oxidation of 4,4'-diapolycopen-4-al to yield 4,4'-diapolycopen-4-oic acid. The chain is 4,4'-diapolycopene aldehyde oxidase from Methylomonas sp.